Here is a 239-residue protein sequence, read N- to C-terminus: Short palate, lung and nasal epithelium carcinoma-associated protein 2A (239 aa).

The signal sequence occupies residues 1-20 (MVQLWKLVLLCGLLAGTSES). A disulfide bridge connects residues Cys166 and Cys209.

This sequence belongs to the BPI/LBP/Plunc superfamily. Plunc family. As to expression, detected in salivary tissues: parotid, submandibular and sublingual glands.

Its subcellular location is the secreted. The chain is Short palate, lung and nasal epithelium carcinoma-associated protein 2A (SPLUNC2A) from Bos taurus (Bovine).